Reading from the N-terminus, the 133-residue chain is Lanmodulin (133 aa).

Residues 1–21 (MAFRLSSAVLLAALVAAPAYA) form the signal peptide. Nd(3+)-binding residues include aspartate 35, aspartate 37, aspartate 39, threonine 41, glutamate 46, aspartate 59, aspartate 61, aspartate 63, threonine 65, glutamate 70, aspartate 84, aspartate 86, aspartate 88, threonine 90, glutamate 95, asparagine 108, aspartate 110, aspartate 112, threonine 114, and glutamate 119. 4 EF-hand domains span residues 35–46 (DPDKDGTIDLKE), 59–70 (DPDKDGTLDAKE), 84–95 (DPDNDGTLDKKE), and 108–119 (NPDNDGTIDARE).

As to quaternary structure, monomer.

It localises to the periplasm. Its function is as follows. High-affinity lanthanide (Ln)-binding protein. Shows 100 million-fold selectivity for La(3+) over Ca(2+). Binds 3 equiv of Ln(3+) with picomolar affinity and a fourth with approximately micromolar affinity. May be involved in receiving and then transporting lanthanides (such as La(3+), Nd(3+) and Sm(3+)) to a specific periplasmic destination. The chain is Lanmodulin from Methylorubrum extorquens (strain ATCC 14718 / DSM 1338 / JCM 2805 / NCIMB 9133 / AM1) (Methylobacterium extorquens).